The primary structure comprises 261 residues: MRTGVIAKKLGMARFFDEAGVHVPVTVLSLEGCQVVAHRTKDKDGYVALQLGAGSKKPKNTSKGLRGHFAKGQVEPKAKLVEFKVSEDNLIDVGAELTADHFVPGQKVDITGTTVGKGFAGAMKRWNFGGLRATHGVSVSHRSHGSTGQRQDPGRTFPGKKMAGHYGQETVTTLNLTVWRVDAERGLILVKGAVPGTEGTFVKIRDAVKAALPADAPKPGAFRGAGAPTPVEAAADEAAPAEEPAVTEAPAAEATEAGDQA.

Over residues 138 to 148 the composition is skewed to low complexity; sequence SVSHRSHGSTG. Disordered stretches follow at residues 138–163 and 214–261; these read SVSH…KKMA and ADAP…GDQA. At glutamine 151 the chain carries N5-methylglutamine. Residues 227-261 are compositionally biased toward low complexity; the sequence is APTPVEAAADEAAPAEEPAVTEAPAAEATEAGDQA.

This sequence belongs to the universal ribosomal protein uL3 family. In terms of assembly, part of the 50S ribosomal subunit. Forms a cluster with proteins L14 and L19. In terms of processing, methylated by PrmB.

In terms of biological role, one of the primary rRNA binding proteins, it binds directly near the 3'-end of the 23S rRNA, where it nucleates assembly of the 50S subunit. The chain is Large ribosomal subunit protein uL3 from Phenylobacterium zucineum (strain HLK1).